A 339-amino-acid polypeptide reads, in one-letter code: Ketol-acid reductoisomerase (NADP(+)) (339 aa).

The KARI N-terminal Rossmann domain occupies 1–182 (MRVYYDRDAD…GGGRAGIIET (182 aa)). NADP(+) is bound by residues 24-27 (YGSQ), Arg48, Ser51, and 83-86 (DEGQ). Residue His108 is part of the active site. Gly134 is a binding site for NADP(+). Positions 183-328 (TFKEEVETDL…EKLRAMMPWI (146 aa)) constitute a KARI C-terminal knotted domain. Residues Asp191, Glu195, Glu227, and Glu231 each coordinate Mg(2+). Ser252 is a binding site for substrate.

Belongs to the ketol-acid reductoisomerase family. Requires Mg(2+) as cofactor.

The catalysed reaction is (2R)-2,3-dihydroxy-3-methylbutanoate + NADP(+) = (2S)-2-acetolactate + NADPH + H(+). It carries out the reaction (2R,3R)-2,3-dihydroxy-3-methylpentanoate + NADP(+) = (S)-2-ethyl-2-hydroxy-3-oxobutanoate + NADPH + H(+). The protein operates within amino-acid biosynthesis; L-isoleucine biosynthesis; L-isoleucine from 2-oxobutanoate: step 2/4. It functions in the pathway amino-acid biosynthesis; L-valine biosynthesis; L-valine from pyruvate: step 2/4. In terms of biological role, involved in the biosynthesis of branched-chain amino acids (BCAA). Catalyzes an alkyl-migration followed by a ketol-acid reduction of (S)-2-acetolactate (S2AL) to yield (R)-2,3-dihydroxy-isovalerate. In the isomerase reaction, S2AL is rearranged via a Mg-dependent methyl migration to produce 3-hydroxy-3-methyl-2-ketobutyrate (HMKB). In the reductase reaction, this 2-ketoacid undergoes a metal-dependent reduction by NADPH to yield (R)-2,3-dihydroxy-isovalerate. The chain is Ketol-acid reductoisomerase (NADP(+)) from Gluconobacter oxydans (strain 621H) (Gluconobacter suboxydans).